The chain runs to 151 residues: Putative pre-16S rRNA nuclease (151 aa).

Belongs to the YqgF nuclease family.

The protein localises to the cytoplasm. In terms of biological role, could be a nuclease involved in processing of the 5'-end of pre-16S rRNA. This is Putative pre-16S rRNA nuclease from Thermosynechococcus vestitus (strain NIES-2133 / IAM M-273 / BP-1).